We begin with the raw amino-acid sequence, 390 residues long: Endonuclease 8-like 1 (390 aa).

Residue P2 is the Schiff-base intermediate with DNA of the active site. The active-site Proton donor is the E3. K54 (proton donor; for beta-elimination activity) is an active-site residue. N176 contacts DNA. Residues 278–390 (TIWFQGDPGP…SLEPEGTSAS (113 aa)) are disordered. Residues 291–301 (KGRKSRKKKSK) are compositionally biased toward basic residues. Over residues 335 to 347 (TATQRPEGTSLQQ) the composition is skewed to polar residues. R339 is a DNA binding site. Catalysis depends on R339, which acts as the Proton donor; for delta-elimination activity.

This sequence belongs to the FPG family. As to expression, ubiquitous.

It is found in the cytoplasm. Its subcellular location is the cytoskeleton. It localises to the microtubule organizing center. The protein localises to the centrosome. The protein resides in the nucleus. It is found in the chromosome. It carries out the reaction 2'-deoxyribonucleotide-(2'-deoxyribose 5'-phosphate)-2'-deoxyribonucleotide-DNA = a 3'-end 2'-deoxyribonucleotide-(2,3-dehydro-2,3-deoxyribose 5'-phosphate)-DNA + a 5'-end 5'-phospho-2'-deoxyribonucleoside-DNA + H(+). In terms of biological role, involved in base excision repair of DNA damaged by oxidation or by mutagenic agents. Acts as a DNA glycosylase that recognizes and removes damaged bases. Has a preference for oxidized pyrimidines, such as thymine glycol, formamidopyrimidine (Fapy) and 5-hydroxyuracil. Has marginal activity towards 8-oxoguanine. Has AP (apurinic/apyrimidinic) lyase activity and introduces nicks in the DNA strand. Cleaves the DNA backbone by beta-delta elimination to generate a single-strand break at the site of the removed base with both 3'- and 5'-phosphates. Has DNA glycosylase/lyase activity towards mismatched uracil and thymine, in particular in U:C and T:C mismatches. Specifically binds 5-hydroxymethylcytosine (5hmC), suggesting that it acts as a specific reader of 5hmC. This chain is Endonuclease 8-like 1 (NEIL1), found in Homo sapiens (Human).